The sequence spans 162 residues: Phosphopantetheine adenylyltransferase (162 aa).

A substrate-binding site is contributed by Thr-14. ATP is bound by residues 14–15 (TF) and His-22. The substrate site is built by Lys-46, Leu-78, and Arg-92. ATP contacts are provided by residues 93-95 (GLR), Glu-103, and 128-134 (HSFISSS).

It belongs to the bacterial CoaD family. Homohexamer. Requires Mg(2+) as cofactor.

Its subcellular location is the cytoplasm. The enzyme catalyses (R)-4'-phosphopantetheine + ATP + H(+) = 3'-dephospho-CoA + diphosphate. The protein operates within cofactor biosynthesis; coenzyme A biosynthesis; CoA from (R)-pantothenate: step 4/5. Reversibly transfers an adenylyl group from ATP to 4'-phosphopantetheine, yielding dephospho-CoA (dPCoA) and pyrophosphate. The chain is Phosphopantetheine adenylyltransferase from Xylella fastidiosa (strain M23).